The sequence spans 902 residues: Phosphoenolpyruvate carboxylase (902 aa).

His132 is an active-site residue. Residues 327–346 (DALERPEKTAGKKSSKRTPY) are disordered. Residue Lys561 is part of the active site.

It belongs to the PEPCase type 1 family. It depends on Mg(2+) as a cofactor.

It carries out the reaction oxaloacetate + phosphate = phosphoenolpyruvate + hydrogencarbonate. Its function is as follows. Forms oxaloacetate, a four-carbon dicarboxylic acid source for the tricarboxylic acid cycle. This chain is Phosphoenolpyruvate carboxylase, found in Corynebacterium diphtheriae (strain ATCC 700971 / NCTC 13129 / Biotype gravis).